The primary structure comprises 331 residues: Peroxisomal nicotinamide adenine dinucleotide carrier (331 aa).

3 Solcar repeats span residues 2–91 (SDAL…FRNR), 109–216 (VGMF…MLTK), and 229–320 (VTAL…LVKG). Helical transmembrane passes span 5–25 (LING…TYPL), 63–85 (LYGG…YYFY), 116–136 (LVAA…WVIV), 180–200 (VYDE…LIMV), 235–255 (FLLG…LLVV), and 293–313 (YKGM…LFMI).

Belongs to the mitochondrial carrier (TC 2.A.29) family. In terms of assembly, homodimer. In terms of tissue distribution, expressed in cotyledons, hypocotyls, vascular tissues, trichomes, hydathodes, seeds, pedicels, flowers and stigma.

The protein resides in the glyoxysome membrane. Inhibited by pyridoxal 5'-phosphate, bathophenanthroline, tannic acid, mersalyl, mercuric chloride and bromocresol purple. Its function is as follows. Mediates the NAD(+) import into peroxisomes. Favors the NAD(+)(in)/AMP(out) antiport exchange, but is also able to catalyze a low unidirectional transport that might be essential under special conditions. Transports CoA, dephospho-CoA, acetyl-CoA, adenosine 3',5'-diphosphate (PAP), NAD(+), AMP, ADP and NADH, but has no activity with ATP, GTP, GDP, NADPH, NADP(+) or FAD. Required for peroxisomes proliferation. The polypeptide is Peroxisomal nicotinamide adenine dinucleotide carrier (PXN) (Arabidopsis thaliana (Mouse-ear cress)).